A 361-amino-acid chain; its full sequence is MNAKGESMLSRRLEALTPYVPGEQPRDRKYLKLNTNENPWPPSPRIEALLREYDPDQLRLYPDPWSLSLRQKIARKYSVDVDNIFVGNGSDEILSFVWYAFFDGLYGKLVFPQFTYSFYPVYCDFYEIPYRRIPLRPDFTLDLEAMIENGGEPSCGMAFPNPNAPTGIALTLKQIEDLLNRYPTDRVVVIDEAYIDFGGESAVGLIDRYANLLVARTFSKSFSLAGLRLGYALGSPELIRALFVTKDSFNSYTVGRLTQTIGEIAIEDEAWFAEKIARIIEARDFFSEELKGQGWQVLPSKANFVFVRKPGLTGQTIYETLKERGILVRYFNVEGIRDFVRVTIGKREDMARLLEELKRLF.

Lys220 is modified (N6-(pyridoxal phosphate)lysine).

It belongs to the class-II pyridoxal-phosphate-dependent aminotransferase family. Histidinol-phosphate aminotransferase subfamily. In terms of assembly, homodimer. The cofactor is pyridoxal 5'-phosphate.

The enzyme catalyses L-histidinol phosphate + 2-oxoglutarate = 3-(imidazol-4-yl)-2-oxopropyl phosphate + L-glutamate. The protein operates within amino-acid biosynthesis; L-histidine biosynthesis; L-histidine from 5-phospho-alpha-D-ribose 1-diphosphate: step 7/9. This is Histidinol-phosphate aminotransferase from Syntrophus aciditrophicus (strain SB).